A 145-amino-acid polypeptide reads, in one-letter code: Transcriptional regulator MraZ (145 aa).

2 consecutive SpoVT-AbrB domains span residues 5-50 (TFNH…ALPQ) and 81-124 (AHEV…DRAA).

This sequence belongs to the MraZ family. Forms oligomers.

It is found in the cytoplasm. The protein resides in the nucleoid. The polypeptide is Transcriptional regulator MraZ (Anaeromyxobacter dehalogenans (strain 2CP-1 / ATCC BAA-258)).